Here is a 361-residue protein sequence, read N- to C-terminus: Queuine tRNA-ribosyltransferase (361 aa).

Asp-92 functions as the Proton acceptor in the catalytic mechanism. Substrate contacts are provided by residues 92–96 (DSGGF), Asp-146, Gln-189, and Gly-216. Positions 247 to 253 (GVGKPAD) are RNA binding. Residue Asp-266 is the Nucleophile of the active site. The RNA binding; important for wobble base 34 recognition stretch occupies residues 271–275 (TRSGR). Zn(2+) contacts are provided by Cys-304, Cys-306, Cys-309, and His-335.

The protein belongs to the queuine tRNA-ribosyltransferase family. As to quaternary structure, homodimer. Within each dimer, one monomer is responsible for RNA recognition and catalysis, while the other monomer binds to the replacement base PreQ1. Zn(2+) serves as cofactor.

It carries out the reaction 7-aminomethyl-7-carbaguanine + guanosine(34) in tRNA = 7-aminomethyl-7-carbaguanosine(34) in tRNA + guanine. It participates in tRNA modification; tRNA-queuosine biosynthesis. In terms of biological role, catalyzes the base-exchange of a guanine (G) residue with the queuine precursor 7-aminomethyl-7-deazaguanine (PreQ1) at position 34 (anticodon wobble position) in tRNAs with GU(N) anticodons (tRNA-Asp, -Asn, -His and -Tyr). Catalysis occurs through a double-displacement mechanism. The nucleophile active site attacks the C1' of nucleotide 34 to detach the guanine base from the RNA, forming a covalent enzyme-RNA intermediate. The proton acceptor active site deprotonates the incoming PreQ1, allowing a nucleophilic attack on the C1' of the ribose to form the product. After dissociation, two additional enzymatic reactions on the tRNA convert PreQ1 to queuine (Q), resulting in the hypermodified nucleoside queuosine (7-(((4,5-cis-dihydroxy-2-cyclopenten-1-yl)amino)methyl)-7-deazaguanosine). This is Queuine tRNA-ribosyltransferase from Rickettsia akari (strain Hartford).